Consider the following 97-residue polypeptide: Large ribosomal subunit protein uL23 (97 aa).

This sequence belongs to the universal ribosomal protein uL23 family. As to quaternary structure, part of the 50S ribosomal subunit. Contacts protein L29, and trigger factor when it is bound to the ribosome.

In terms of biological role, one of the early assembly proteins it binds 23S rRNA. One of the proteins that surrounds the polypeptide exit tunnel on the outside of the ribosome. Forms the main docking site for trigger factor binding to the ribosome. In Brucella abortus (strain S19), this protein is Large ribosomal subunit protein uL23.